Reading from the N-terminus, the 908-residue chain is Protein translocase subunit SecA (908 aa).

Residues Gln87, 105-109, and Asp494 contribute to the ATP site; that span reads GEGKT. Residues 871–908 are disordered; that stretch reads QEFSGGNLNRSQSNGSSVTVTTSSGGGTERKTSRRRKR. Residues 874-884 are compositionally biased toward polar residues; the sequence is SGGNLNRSQSN.

It belongs to the SecA family. Monomer and homodimer. Part of the essential Sec protein translocation apparatus which comprises SecA, SecYEG and auxiliary proteins SecDF. Other proteins may also be involved.

The protein localises to the cell inner membrane. It localises to the cytoplasm. The catalysed reaction is ATP + H2O + cellular proteinSide 1 = ADP + phosphate + cellular proteinSide 2.. Part of the Sec protein translocase complex. Interacts with the SecYEG preprotein conducting channel. Has a central role in coupling the hydrolysis of ATP to the transfer of proteins into and across the cell membrane, serving as an ATP-driven molecular motor driving the stepwise translocation of polypeptide chains across the membrane. This Leptospira interrogans serogroup Icterohaemorrhagiae serovar Lai (strain 56601) protein is Protein translocase subunit SecA.